Reading from the N-terminus, the 1141-residue chain is Envelopment polyprotein (1141 aa).

Positions 1-18 are cleaved as a signal peptide; sequence MGRLYLIVLGVLITATAG. Residues 19–483 lie on the Lumenal side of the membrane; that stretch reads FPRSVHELKI…HSLAVELCVP (465 aa). Intrachain disulfides connect cysteine 30/cysteine 158, cysteine 64/cysteine 164, cysteine 113/cysteine 135, cysteine 140/cysteine 145, cysteine 182/cysteine 192, cysteine 217/cysteine 253, cysteine 242/cysteine 357, cysteine 382/cysteine 441, cysteine 386/cysteine 395, and cysteine 458/cysteine 481. An N-linked (GlcNAc...) asparagine; by host glycan is attached at asparagine 141. Residue asparagine 353 is glycosylated (N-linked (GlcNAc...) asparagine; by host). Asparagine 405 carries N-linked (GlcNAc...) asparagine; by host glycosylation. A helical transmembrane segment spans residues 484-506; the sequence is GIHGWATIALVITFCFGWLLIPT. Topologically, residues 507–633 are cytoplasmic; sequence TTMVVLKCLR…LGVFRYKSRC (127 aa). Positions 522-539 are binding to the ribonucleoprotein; sequence CSHYSTESKFKVILEKVK. 2 consecutive CCHC-type zinc fingers follow at residues 551 to 571 and 576 to 597; these read CDIC…KKSC and CPYC…YAVC. 3 binding to the ribonucleoprotein regions span residues 594–611, 598–609, and 617–631; these read YAVC…KKSL, KLTGRFHEALKK, and QRGC…RYKS. The ITAM domain maps to 617–640; it reads QRGCYRTLGVFRYKSRCYVGLVWM. Residues tyrosine 621 and tyrosine 634 each carry the phosphotyrosine modification. Positions 621-624 match the YxxL motif; it reads YRTL. The helical transmembrane segment at 634-654 threads the bilayer; it reads YVGLVWMCLLTLELIVWAASA. Over 655–1110 the chain is Lumenal; that stretch reads DTPLLEPGWS…EWLLGILNGN (456 aa). Disulfide bonds link cysteine 741/cysteine 776, cysteine 745/cysteine 783, cysteine 757/cysteine 890, cysteine 771/cysteine 901, cysteine 786/cysteine 909, cysteine 812/cysteine 821, cysteine 829/cysteine 838, and cysteine 869/cysteine 873. Residues 763–783 form a fusion loop region; that stretch reads YQYETSWSCNPPDCPGVGTGC. Asparagine 933 carries an N-linked (GlcNAc...) asparagine; by host glycan. 5 disulfides stabilise this stretch: cysteine 975/cysteine 1005, cysteine 998/cysteine 1050, cysteine 1015/cysteine 1020, cysteine 1051/cysteine 1056, and cysteine 1090/cysteine 1094. The helical transmembrane segment at 1111–1131 threads the bilayer; it reads WVVVAVLVIILLISIFLFSFF. The interval 1127-1141 is binding to the ribonucleoprotein; that stretch reads LFSFFCPIRSHKKQL. Topologically, residues 1132-1141 are cytoplasmic; the sequence is CPIRSHKKQL.

This sequence belongs to the hantavirus envelope glycoprotein family. As to quaternary structure, homodimer. Homotetramer; forms heterotetrameric Gn-Gc spikes in the pre-fusion conformation. Interacts (via C-terminus) with the nucleoprotein. Interacts with host TUFM; this interaction contributes to the virus-induced degradation of mitochondria by autophagy, which leads to degradation of host MAVS and inhibition of type I interferon (IFN) responses. Interacts with host MAP1LC3B; this interaction contributes to the virus-induced degradation of mitochondria by autophagy, which leads to degradation of host MAVS and inhibition of type I interferon (IFN) responses. In terms of assembly, homodimer. Homotetramer; forms heterotetrameric Gn-Gc spikes in the pre-fusion conformation. Homotrimer; forms homotrimer in the post-fusion conformation at acidic pH. Interacts (via C-terminus) with the nucleoprotein. In terms of processing, envelope polyprotein precursor is quickly cleaved in vivo just after synthesis, presumably by host signal peptidase.

It is found in the virion membrane. The protein resides in the host cell surface. The protein localises to the host Golgi apparatus membrane. It localises to the host endoplasmic reticulum membrane. Its subcellular location is the host mitochondrion. Functionally, forms homotetramers with glycoprotein C at the surface of the virion. Attaches the virion to host cell receptors including integrin ITGAV/ITGB3. This attachment induces virion internalization predominantly through clathrin-dependent endocytosis. Mediates the assembly and budding of infectious virus particles through its interaction with the nucleocapsid protein and the viral genome. May dysregulate normal immune and endothelial cell responses through an ITAM motif. Translocates to mitochondria, binds to host TUFM and recruits MAP1LC3B. These interactions induce mitochondrial autophagy and therefore destruction of host MAVS leading to inhibition of type I interferon (IFN) responses. Concomitant breakdown of glycoprotein N is apparently prevented by the nucleoprotein that may inhibit Gn-stimulated autophagosome-lysosome fusion. Interacts with the viral genomic RNA. In terms of biological role, forms homotetramers with glycoprotein N at the surface of the virion. Attaches the virion to host cell receptors including integrin ITGAV/ITGB3. This attachment induces virion internalization predominantly through clathrin-dependent endocytosis. Class II fusion protein that promotes fusion of viral membrane with host endosomal membrane after endocytosis of the virion. This Homo sapiens (Human) protein is Envelopment polyprotein (GP).